Here is a 312-residue protein sequence, read N- to C-terminus: Ribosomal protein L11 methyltransferase (312 aa).

S-adenosyl-L-methionine-binding residues include T162, G183, D205, and N248.

The protein belongs to the methyltransferase superfamily. PrmA family.

It localises to the cytoplasm. It carries out the reaction L-lysyl-[protein] + 3 S-adenosyl-L-methionine = N(6),N(6),N(6)-trimethyl-L-lysyl-[protein] + 3 S-adenosyl-L-homocysteine + 3 H(+). Methylates ribosomal protein L11. This is Ribosomal protein L11 methyltransferase from Bacillus cereus (strain B4264).